A 227-amino-acid polypeptide reads, in one-letter code: Cytochrome c oxidase subunit 2 (227 aa).

Topologically, residues 1 to 14 are mitochondrial intermembrane; it reads MAYPFQLGLQDATS. A helical transmembrane segment spans residues 15-45; the sequence is PIMEELMNFHDHTLMIVFLISSLVLYIISLM. Residues 46 to 59 are Mitochondrial matrix-facing; the sequence is LTTKLTHTSTMDAQ. Residues 60–87 traverse the membrane as a helical segment; sequence EVETIWTILPAAILILIALPSLRILYMM. Residues 88–227 lie on the Mitochondrial intermembrane side of the membrane; that stretch reads DEINNPVLTV…YFENWSASMI (140 aa). Histidine 161, cysteine 196, glutamate 198, cysteine 200, histidine 204, and methionine 207 together coordinate Cu cation. Mg(2+) is bound at residue glutamate 198.

The protein belongs to the cytochrome c oxidase subunit 2 family. As to quaternary structure, component of the cytochrome c oxidase (complex IV, CIV), a multisubunit enzyme composed of 14 subunits. The complex is composed of a catalytic core of 3 subunits MT-CO1, MT-CO2 and MT-CO3, encoded in the mitochondrial DNA, and 11 supernumerary subunits COX4I, COX5A, COX5B, COX6A, COX6B, COX6C, COX7A, COX7B, COX7C, COX8 and NDUFA4, which are encoded in the nuclear genome. The complex exists as a monomer or a dimer and forms supercomplexes (SCs) in the inner mitochondrial membrane with NADH-ubiquinone oxidoreductase (complex I, CI) and ubiquinol-cytochrome c oxidoreductase (cytochrome b-c1 complex, complex III, CIII), resulting in different assemblies (supercomplex SCI(1)III(2)IV(1) and megacomplex MCI(2)III(2)IV(2)). Found in a complex with TMEM177, COA6, COX18, COX20, SCO1 and SCO2. Interacts with TMEM177 in a COX20-dependent manner. Interacts with COX20. Interacts with COX16. The cofactor is Cu cation.

The protein resides in the mitochondrion inner membrane. The enzyme catalyses 4 Fe(II)-[cytochrome c] + O2 + 8 H(+)(in) = 4 Fe(III)-[cytochrome c] + 2 H2O + 4 H(+)(out). Functionally, component of the cytochrome c oxidase, the last enzyme in the mitochondrial electron transport chain which drives oxidative phosphorylation. The respiratory chain contains 3 multisubunit complexes succinate dehydrogenase (complex II, CII), ubiquinol-cytochrome c oxidoreductase (cytochrome b-c1 complex, complex III, CIII) and cytochrome c oxidase (complex IV, CIV), that cooperate to transfer electrons derived from NADH and succinate to molecular oxygen, creating an electrochemical gradient over the inner membrane that drives transmembrane transport and the ATP synthase. Cytochrome c oxidase is the component of the respiratory chain that catalyzes the reduction of oxygen to water. Electrons originating from reduced cytochrome c in the intermembrane space (IMS) are transferred via the dinuclear copper A center (CU(A)) of subunit 2 and heme A of subunit 1 to the active site in subunit 1, a binuclear center (BNC) formed by heme A3 and copper B (CU(B)). The BNC reduces molecular oxygen to 2 water molecules using 4 electrons from cytochrome c in the IMS and 4 protons from the mitochondrial matrix. The sequence is that of Cytochrome c oxidase subunit 2 (MT-CO2) from Leggadina forresti (Forrest's mouse).